The primary structure comprises 283 residues: Protein/nucleic acid deglycase HchA (283 aa).

Residues histidine 86, glutamate 91, and histidine 123 each contribute to the Zn(2+) site. The active-site Nucleophile is cysteine 185.

Belongs to the peptidase C56 family. HchA subfamily. As to quaternary structure, homodimer.

The protein localises to the cytoplasm. The catalysed reaction is N(omega)-(1-hydroxy-2-oxopropyl)-L-arginyl-[protein] + H2O = lactate + L-arginyl-[protein] + H(+). It carries out the reaction N(6)-(1-hydroxy-2-oxopropyl)-L-lysyl-[protein] + H2O = lactate + L-lysyl-[protein] + H(+). The enzyme catalyses S-(1-hydroxy-2-oxopropyl)-L-cysteinyl-[protein] + H2O = lactate + L-cysteinyl-[protein] + H(+). It catalyses the reaction N(omega)-(1-hydroxy-2-oxoethyl)-L-arginyl-[protein] + H2O = L-arginyl-[protein] + glycolate + H(+). The catalysed reaction is N(6)-(1-hydroxy-2-oxoethyl)-L-lysyl-[protein] + H2O = glycolate + L-lysyl-[protein] + H(+). It carries out the reaction S-(1-hydroxy-2-oxoethyl)-L-cysteinyl-[protein] + H2O = glycolate + L-cysteinyl-[protein] + H(+). The enzyme catalyses N(2)-(1-hydroxy-2-oxopropyl)-dGTP + H2O = lactate + dGTP + H(+). It catalyses the reaction N(2)-(1-hydroxy-2-oxopropyl)-GTP + H2O = lactate + GTP + H(+). The catalysed reaction is N(2)-(1-hydroxy-2-oxopropyl)-GDP + H2O = lactate + GDP + H(+). It carries out the reaction N(2)-(1-hydroxy-2-oxopropyl)-GMP + H2O = lactate + GMP + H(+). The enzyme catalyses N(2)-(1-hydroxy-2-oxoethyl)-dGTP + H2O = dGTP + glycolate + H(+). It catalyses the reaction N(2)-(1-hydroxy-2-oxoethyl)-GTP + H2O = glycolate + GTP + H(+). The catalysed reaction is N(2)-(1-hydroxy-2-oxoethyl)-GDP + H2O = glycolate + GDP + H(+). It carries out the reaction N(2)-(1-hydroxy-2-oxoethyl)-GMP + H2O = glycolate + GMP + H(+). The enzyme catalyses an N(2)-(1-hydroxy-2-oxopropyl)-guanosine in RNA + H2O = a guanosine in RNA + lactate + H(+). It catalyses the reaction an N(2)-(1-hydroxy-2-oxopropyl)-2'-deoxyguanosine in DNA + H2O = a 2'-deoxyguanosine in DNA + lactate + H(+). The catalysed reaction is an N(2)-(1-hydroxy-2-oxoethyl)-guanosine in RNA + H2O = a guanosine in RNA + glycolate + H(+). It carries out the reaction an N(2)-(1-hydroxy-2-oxoethyl)-2'-deoxyguanosine in DNA + H2O = a 2'-deoxyguanosine in DNA + glycolate + H(+). Its function is as follows. Protein and nucleotide deglycase that catalyzes the deglycation of the Maillard adducts formed between amino groups of proteins or nucleotides and reactive carbonyl groups of glyoxals. Thus, functions as a protein deglycase that repairs methylglyoxal- and glyoxal-glycated proteins, and releases repaired proteins and lactate or glycolate, respectively. Deglycates cysteine, arginine and lysine residues in proteins, and thus reactivates these proteins by reversing glycation by glyoxals. Acts on early glycation intermediates (hemithioacetals and aminocarbinols), preventing the formation of Schiff bases and advanced glycation endproducts (AGE). Also functions as a nucleotide deglycase able to repair glycated guanine in the free nucleotide pool (GTP, GDP, GMP, dGTP) and in DNA and RNA. Is thus involved in a major nucleotide repair system named guanine glycation repair (GG repair), dedicated to reversing methylglyoxal and glyoxal damage via nucleotide sanitization and direct nucleic acid repair. Plays an important role in protecting cells from carbonyl stress. The protein is Protein/nucleic acid deglycase HchA of Shigella flexneri.